A 228-amino-acid polypeptide reads, in one-letter code: Protein GrpE (228 aa).

Basic and acidic residues predominate over residues 1–22 (MDDKQKTNEEVKASSFDSEKSS). The interval 1–71 (MDDKQKTNEE…DQTNTNNNEL (71 aa)) is disordered. The segment covering 38-53 (QNVQHDNGSNPAQKQN) has biased composition (polar residues).

This sequence belongs to the GrpE family. In terms of assembly, homodimer.

It localises to the cytoplasm. Functionally, participates actively in the response to hyperosmotic and heat shock by preventing the aggregation of stress-denatured proteins, in association with DnaK and GrpE. It is the nucleotide exchange factor for DnaK and may function as a thermosensor. Unfolded proteins bind initially to DnaJ; upon interaction with the DnaJ-bound protein, DnaK hydrolyzes its bound ATP, resulting in the formation of a stable complex. GrpE releases ADP from DnaK; ATP binding to DnaK triggers the release of the substrate protein, thus completing the reaction cycle. Several rounds of ATP-dependent interactions between DnaJ, DnaK and GrpE are required for fully efficient folding. In Coprothermobacter proteolyticus (strain ATCC 35245 / DSM 5265 / OCM 4 / BT), this protein is Protein GrpE.